The primary structure comprises 385 residues: S-adenosylmethionine synthase (385 aa).

Histidine 16 is a binding site for ATP. Residue aspartate 18 participates in Mg(2+) binding. Glutamate 44 provides a ligand contact to K(+). Glutamate 57 and glutamine 100 together coordinate L-methionine. The flexible loop stretch occupies residues 100–110 (QSPDINQGVDR). Residues 164-166 (DGK), 230-231 (KF), aspartate 239, 245-246 (RK), alanine 262, and lysine 266 contribute to the ATP site. Aspartate 239 is a binding site for L-methionine. Lysine 270 contributes to the L-methionine binding site.

Belongs to the AdoMet synthase family. Homotetramer; dimer of dimers. The cofactor is Mg(2+). It depends on K(+) as a cofactor.

Its subcellular location is the cytoplasm. The enzyme catalyses L-methionine + ATP + H2O = S-adenosyl-L-methionine + phosphate + diphosphate. Its pathway is amino-acid biosynthesis; S-adenosyl-L-methionine biosynthesis; S-adenosyl-L-methionine from L-methionine: step 1/1. In terms of biological role, catalyzes the formation of S-adenosylmethionine (AdoMet) from methionine and ATP. The overall synthetic reaction is composed of two sequential steps, AdoMet formation and the subsequent tripolyphosphate hydrolysis which occurs prior to release of AdoMet from the enzyme. This Helicobacter pylori (strain HPAG1) protein is S-adenosylmethionine synthase.